A 209-amino-acid chain; its full sequence is Orotate phosphoribosyltransferase (209 aa).

Residues arginine 96, lysine 100, histidine 102, and 122–130 (EDLISTGGS) contribute to the 5-phospho-alpha-D-ribose 1-diphosphate site. Serine 126 contacts orotate.

Belongs to the purine/pyrimidine phosphoribosyltransferase family. PyrE subfamily. Homodimer. Mg(2+) is required as a cofactor.

It carries out the reaction orotidine 5'-phosphate + diphosphate = orotate + 5-phospho-alpha-D-ribose 1-diphosphate. The protein operates within pyrimidine metabolism; UMP biosynthesis via de novo pathway; UMP from orotate: step 1/2. Its function is as follows. Catalyzes the transfer of a ribosyl phosphate group from 5-phosphoribose 1-diphosphate to orotate, leading to the formation of orotidine monophosphate (OMP). The protein is Orotate phosphoribosyltransferase of Streptococcus pyogenes serotype M12 (strain MGAS2096).